A 132-amino-acid chain; its full sequence is Fumarate reductase subunit C (132 aa).

The next 3 helical transmembrane spans lie at 36–56, 70–90, and 110–130; these read AIPTLWFCLVLLYGVISLGSL, IVIILNIITLGAMLLNTVTYY, and IITMALWAVTAFISLVILVFM.

It belongs to the FrdC family. As to quaternary structure, part of an enzyme complex containing four subunits: a flavoprotein (FrdA), an iron-sulfur protein (FrdB), and two hydrophobic anchor proteins (FrdC and FrdD).

Its subcellular location is the cell inner membrane. Anchors the catalytic components of the fumarate reductase complex to the cell membrane, binds quinones. In Pasteurella multocida (strain Pm70), this protein is Fumarate reductase subunit C.